We begin with the raw amino-acid sequence, 182 residues long: Neuropeptide CCHamide-1 (182 aa).

Residues 1 to 22 (MWYSKCSWTLVVLVALFALVTG) form the signal peptide. Cysteines 24 and 31 form a disulfide. Residue H35 is modified to Histidine amide. Residues 39–182 (SGGKAVIDAK…ENYSGYELTK (144 aa)) constitute a propeptide that is removed on maturation. Disordered regions lie at residues 67-103 (NNNN…AAPA) and 133-154 (QLQD…DAAA). The segment covering 87 to 103 (RNTNANSANNIPLAAPA) has biased composition (low complexity). N174 carries N-linked (GlcNAc...) asparagine glycosylation.

Expressed in endocrine cells of the larval midgut (at protein level). In the brain, expressed in the optic lobes, lateral protocerebrum, subesophageal ganglion, and intermediate and superior medial protocerebrum (at protein level). Expressed in DN1a neurons but not in other clock neurons and expression follows a rhythmic pattern controlled by the circadian clock (at protein level). In the posterior midgut, expressed in enteroendocrine cells (at protein level). Low levels in larval brain with higher levels in larval and adult gut and adult brain.

The protein resides in the secreted. Functionally, neuropeptide ligand for the CCHamide-1 receptor CCHa1-R. Neuromessenger mediating signaling between neuronal cells of the circadian clock network involved in regulation of sleep latency (the time required to fall asleep), amount of sleep and depth of sleep (arousability). Together with PDF, involved in regulating intensity and periodicity of daytime activity. In subsets of clock neurons modulates the rhythmic expression of PDP1 and PDF, and together with PDF modulates the rhythmic expression of circadian protein PER/period, but not TIM/timeless. Mediates signaling from DN1a (anterior dorsal neurons 1) clock neurons to s-LNv (small ventral lateral neurons) clock neurons through CCHa1-R, contributing to regulation of activity rhythms by the circadian clock, particularly in the morning. May be involved in signaling between clock neurons and non-clock neurons, such as the fan-shaped body, involved in sleep homeostasis. In response to a high protein diet mediates hormonal signaling between the gut and a CCHa1-R expressing subset of dopaminergic cells in the protocerebral anterior medial (PAM) cluster of the brain. This suppresses arousability by mechano-sensory stimulation (but not thermal stimulation) but is not involved in regulation of sleep patterns. The chain is Neuropeptide CCHamide-1 from Drosophila melanogaster (Fruit fly).